We begin with the raw amino-acid sequence, 467 residues long: Chromosomal replication initiator protein DnaA (467 aa).

Positions Met-1–Ala-90 are domain I, interacts with DnaA modulators. Positions Val-91–Ser-130 are domain II. Low complexity predominate over residues Ala-97–Pro-111. The interval Ala-97 to Asn-119 is disordered. Residues Asn-131–Ala-347 are domain III, AAA+ region. The ATP site is built by Gly-175, Gly-177, Lys-178, and Thr-179. Positions Asn-348–Ser-467 are domain IV, binds dsDNA.

The protein belongs to the DnaA family. As to quaternary structure, oligomerizes as a right-handed, spiral filament on DNA at oriC.

It is found in the cytoplasm. In terms of biological role, plays an essential role in the initiation and regulation of chromosomal replication. ATP-DnaA binds to the origin of replication (oriC) to initiate formation of the DNA replication initiation complex once per cell cycle. Binds the DnaA box (a 9 base pair repeat at the origin) and separates the double-stranded (ds)DNA. Forms a right-handed helical filament on oriC DNA; dsDNA binds to the exterior of the filament while single-stranded (ss)DNA is stabiized in the filament's interior. The ATP-DnaA-oriC complex binds and stabilizes one strand of the AT-rich DNA unwinding element (DUE), permitting loading of DNA polymerase. After initiation quickly degrades to an ADP-DnaA complex that is not apt for DNA replication. Binds acidic phospholipids. This Escherichia coli O157:H7 protein is Chromosomal replication initiator protein DnaA.